The primary structure comprises 139 residues: Putative nickel-responsive regulator (139 aa).

Ni(2+) is bound by residues His-79, His-90, His-92, and Cys-98.

The protein belongs to the transcriptional regulatory CopG/NikR family. Ni(2+) is required as a cofactor.

Functionally, transcriptional regulator. The sequence is that of Putative nickel-responsive regulator from Geobacter metallireducens (strain ATCC 53774 / DSM 7210 / GS-15).